The primary structure comprises 562 residues: Potassium-transporting ATPase potassium-binding subunit (562 aa).

12 consecutive transmembrane segments (helical) span residues 5-25 (GILAIFLVVLALVACAWPLGG), 65-85 (AYLRAMMVSNLVMALFAYAVF), 135-155 (IGITFLQFTSAATGLAAAMAF), 181-201 (LLLPIAAILAVLLLALGVPET), 257-277 (ILEIMGMGLIPTALVFTAGHF), 283-303 (LAIVLCTLLGAILLAGAYIVY), 331-351 (FGLPLTSLFVAATTAYTTGAV), 358-378 (LMPLSGMVPLLFMMFNLIFGG), 381-401 (VGLLNILMFLIIAVFISGLMV), 422-442 (AAMLVHPFVILVPTAIAMALP), 486-506 (ISIGLVMLFGRYVSIIAMLAI), and 528-548 (FAFGYVFVAVFIIVGALTFFP).

Belongs to the KdpA family. In terms of assembly, the system is composed of three essential subunits: KdpA, KdpB and KdpC.

The protein resides in the cell membrane. In terms of biological role, part of the high-affinity ATP-driven potassium transport (or Kdp) system, which catalyzes the hydrolysis of ATP coupled with the electrogenic transport of potassium into the cytoplasm. This subunit binds the extracellular potassium ions and delivers the ions to the membrane domain of KdpB through an intramembrane tunnel. The protein is Potassium-transporting ATPase potassium-binding subunit of Alicyclobacillus acidocaldarius subsp. acidocaldarius (strain ATCC 27009 / DSM 446 / BCRC 14685 / JCM 5260 / KCTC 1825 / NBRC 15652 / NCIMB 11725 / NRRL B-14509 / 104-IA) (Bacillus acidocaldarius).